A 155-amino-acid chain; its full sequence is Aspartate carbamoyltransferase regulatory chain (155 aa).

Residues Cys-109, Cys-114, Cys-138, and Cys-141 each contribute to the Zn(2+) site.

This sequence belongs to the PyrI family. Contains catalytic and regulatory chains. Zn(2+) is required as a cofactor.

Functionally, involved in allosteric regulation of aspartate carbamoyltransferase. The chain is Aspartate carbamoyltransferase regulatory chain from Vibrio cholerae serotype O1 (strain ATCC 39541 / Classical Ogawa 395 / O395).